A 79-amino-acid polypeptide reads, in one-letter code: MSQEILEKVRSIVAEQLSVDAAEVKPESNFQNDLGADSLDTVELVMALEEAFDIEIPDEAAEGIATVGDAVSYIQEKKG.

In terms of domain architecture, Carrier spans 3–78 (QEILEKVRSI…DAVSYIQEKK (76 aa)). Serine 38 bears the O-(pantetheine 4'-phosphoryl)serine mark.

It belongs to the acyl carrier protein (ACP) family. In terms of processing, 4'-phosphopantetheine is transferred from CoA to a specific serine of apo-ACP by AcpS. This modification is essential for activity because fatty acids are bound in thioester linkage to the sulfhydryl of the prosthetic group.

It localises to the cytoplasm. It functions in the pathway lipid metabolism; fatty acid biosynthesis. Carrier of the growing fatty acid chain in fatty acid biosynthesis. The protein is Acyl carrier protein of Synechococcus sp. (strain RCC307).